We begin with the raw amino-acid sequence, 154 residues long: Small ribosomal subunit protein bS6 (154 aa).

A disordered region spans residues 97-154 (DSEPSAMMQKRDRDDRKDRERGRRRDDEGFGGGGGFGGDRGDRGDRGDRGERSFGGEG). 2 stretches are compositionally biased toward basic and acidic residues: residues 105–124 (QKRDRDDRKDRERGRRRDDE) and 135–154 (DRGDRGDRGDRGERSFGGEG).

Belongs to the bacterial ribosomal protein bS6 family.

Its function is as follows. Binds together with bS18 to 16S ribosomal RNA. This is Small ribosomal subunit protein bS6 from Methylobacterium radiotolerans (strain ATCC 27329 / DSM 1819 / JCM 2831 / NBRC 15690 / NCIMB 10815 / 0-1).